Here is an 879-residue protein sequence, read N- to C-terminus: Alanine--tRNA ligase (879 aa).

Residues H567, H571, C669, and H673 each contribute to the Zn(2+) site.

This sequence belongs to the class-II aminoacyl-tRNA synthetase family. It depends on Zn(2+) as a cofactor.

It localises to the cytoplasm. It carries out the reaction tRNA(Ala) + L-alanine + ATP = L-alanyl-tRNA(Ala) + AMP + diphosphate. In terms of biological role, catalyzes the attachment of alanine to tRNA(Ala) in a two-step reaction: alanine is first activated by ATP to form Ala-AMP and then transferred to the acceptor end of tRNA(Ala). Also edits incorrectly charged Ser-tRNA(Ala) and Gly-tRNA(Ala) via its editing domain. In Lactobacillus acidophilus (strain ATCC 700396 / NCK56 / N2 / NCFM), this protein is Alanine--tRNA ligase.